A 400-amino-acid chain; its full sequence is 3-phenylpropionate/cinnamic acid dioxygenase ferredoxin--NAD(+) reductase component (400 aa).

5–36 (TIIIVGGGQAAAMAAASLRQQGFTGELHLFSD) contacts FAD. 146 to 174 (SVVIVGAGTIGLELAASATQRGCKVTVIE) lines the NAD(+) pocket.

This sequence belongs to the bacterial ring-hydroxylating dioxygenase ferredoxin reductase family. As to quaternary structure, this dioxygenase system consists of four proteins: the two subunits of the hydroxylase component (HcaE and HcaF), a ferredoxin (HcaC) and a ferredoxin reductase (HcaD). Requires FAD as cofactor.

The enzyme catalyses 2 reduced [2Fe-2S]-[ferredoxin] + NAD(+) + H(+) = 2 oxidized [2Fe-2S]-[ferredoxin] + NADH. The protein operates within aromatic compound metabolism; 3-phenylpropanoate degradation. Functionally, part of the multicomponent 3-phenylpropionate dioxygenase, that converts 3-phenylpropionic acid (PP) and cinnamic acid (CI) into 3-phenylpropionate-dihydrodiol (PP-dihydrodiol) and cinnamic acid-dihydrodiol (CI-dihydrodiol), respectively. The protein is 3-phenylpropionate/cinnamic acid dioxygenase ferredoxin--NAD(+) reductase component of Escherichia coli O17:K52:H18 (strain UMN026 / ExPEC).